The chain runs to 135 residues: Cystatin-1 (135 aa).

Positions 1–24 (MRKHRIVSLVAALLVLLALAAVSS) are cleaved as a signal peptide. Residues 86 to 90 (QVVAG) carry the Secondary area of contact motif.

It belongs to the cystatin family. Phytocystatin subfamily.

In Zea mays (Maize), this protein is Cystatin-1 (RAMDAZC7).